The chain runs to 133 residues: Ribonuclease P protein component (133 aa).

The protein belongs to the RnpA family. Consists of a catalytic RNA component (M1 or rnpB) and a protein subunit.

The catalysed reaction is Endonucleolytic cleavage of RNA, removing 5'-extranucleotides from tRNA precursor.. In terms of biological role, RNaseP catalyzes the removal of the 5'-leader sequence from pre-tRNA to produce the mature 5'-terminus. It can also cleave other RNA substrates such as 4.5S RNA. The protein component plays an auxiliary but essential role in vivo by binding to the 5'-leader sequence and broadening the substrate specificity of the ribozyme. The protein is Ribonuclease P protein component of Synechococcus sp. (strain JA-2-3B'a(2-13)) (Cyanobacteria bacterium Yellowstone B-Prime).